Reading from the N-terminus, the 202-residue chain is Transmembrane protein 223 (202 aa).

Over 1–43 the chain is Mitochondrial matrix; sequence MAAPWRRWPTGLLAVLRPLLTCRPLQGTTLQRDVLLFEHDRGR. The helical transmembrane segment at 44-64 threads the bilayer; sequence FFTILGLFCAGQGVFWASMAV. At 65–97 the chain is on the mitochondrial intermembrane side; it reads AAVSRPPVPVQPLDAEVPNRGPFDLRSALWRYG. The helical transmembrane segment at 98–118 threads the bilayer; that stretch reads LAVGCGAIGALVLGAGLLFSL. Residues 119-202 lie on the Mitochondrial matrix side of the membrane; that stretch reads RSVRSVVLRA…DNTVGAYRSL (84 aa).

The protein belongs to the TMEM223 family. Associates with the mitochondrial ribosome.

It localises to the mitochondrion inner membrane. Its function is as follows. Mitochondrial ribosome-associated protein involved in the first steps of cytochrome c oxidase complex (complex IV) biogenesis. Stimulates the translation of MT-CO1 mRNA and is a constituent of early MT-CO1 assembly intermediates. In Homo sapiens (Human), this protein is Transmembrane protein 223.